Consider the following 828-residue polypeptide: ADP-ribosylation factor GTPase-activating protein AGD1 (828 aa).

Residues 1 to 225 form the BAR domain; the sequence is MHFAKLDDSP…INQVLAYAHQ (225 aa). The stretch at 225–255 forms a coiled coil; the sequence is QSRECANYEMASLNERMQEYQRQVDRETRNS. A disordered region spans residues 247–268; sequence QVDRETRNSCVSPTGDGMRHNS. Positions 288 to 425 constitute a PH domain; sequence QTIRQGYLSK…WIEKITGVIA (138 aa). The residue at position 441 (serine 441) is a Phosphoserine. Residues 498–643 form the Arf-GAP domain; the sequence is EKPIDVLTRV…IFVRKAIDSQ (146 aa). A C4-type zinc finger spans residues 513-536; it reads CADCGAPEPDWASLNLGVLICIEC. A compositionally biased stretch (low complexity) spans 590–600; sequence TSSASRSSGTP. A disordered region spans residues 590 to 611; the sequence is TSSASRSSGTPKSDRPRKLLVR. ANK repeat units lie at residues 735-764 and 768-797; these read NDCSLLHLACLSADIGMVELLLQYGAKINA and KGRTPLHHCIISRRYAIARLLLMRGGDPNA.

Expressed in roots, but not in hypocotyls or cotyledons. Low levels detected in leaf and shoot apical meristems and in siliques.

The protein resides in the endosome. Functionally, probable GTPase-activating protein. Regulator of membrane trafficking. Required for maintaining a straight growth of root hairs. This is ADP-ribosylation factor GTPase-activating protein AGD1 (AGD1) from Arabidopsis thaliana (Mouse-ear cress).